We begin with the raw amino-acid sequence, 315 residues long: Methionyl-tRNA formyltransferase (315 aa).

Residue 110-113 coordinates (6S)-5,6,7,8-tetrahydrofolate; sequence SLLP.

The protein belongs to the Fmt family.

The enzyme catalyses L-methionyl-tRNA(fMet) + (6R)-10-formyltetrahydrofolate = N-formyl-L-methionyl-tRNA(fMet) + (6S)-5,6,7,8-tetrahydrofolate + H(+). In terms of biological role, attaches a formyl group to the free amino group of methionyl-tRNA(fMet). The formyl group appears to play a dual role in the initiator identity of N-formylmethionyl-tRNA by promoting its recognition by IF2 and preventing the misappropriation of this tRNA by the elongation apparatus. This Cutibacterium acnes (strain DSM 16379 / KPA171202) (Propionibacterium acnes) protein is Methionyl-tRNA formyltransferase.